Here is an 85-residue protein sequence, read N- to C-terminus: Small ribosomal subunit protein bS16 (85 aa).

It belongs to the bacterial ribosomal protein bS16 family.

The sequence is that of Small ribosomal subunit protein bS16 from Metamycoplasma arthritidis (strain 158L3-1) (Mycoplasma arthritidis).